Here is a 556-residue protein sequence, read N- to C-terminus: uncharacterized protein (556 aa).

A helical membrane pass occupies residues 16–36; it reads LFWTIGVLGAGALTTFSAVMI.

The protein resides in the membrane. This is an uncharacterized protein from Mycoplasma genitalium (strain ATCC 33530 / DSM 19775 / NCTC 10195 / G37) (Mycoplasmoides genitalium).